Here is a 351-residue protein sequence, read N- to C-terminus: UDP-3-O-acylglucosamine N-acyltransferase (351 aa).

The active-site Proton acceptor is the histidine 257.

It belongs to the transferase hexapeptide repeat family. LpxD subfamily. In terms of assembly, homotrimer.

The enzyme catalyses a UDP-3-O-[(3R)-3-hydroxyacyl]-alpha-D-glucosamine + a (3R)-hydroxyacyl-[ACP] = a UDP-2-N,3-O-bis[(3R)-3-hydroxyacyl]-alpha-D-glucosamine + holo-[ACP] + H(+). It participates in bacterial outer membrane biogenesis; LPS lipid A biosynthesis. Catalyzes the N-acylation of UDP-3-O-acylglucosamine using 3-hydroxyacyl-ACP as the acyl donor. Is involved in the biosynthesis of lipid A, a phosphorylated glycolipid that anchors the lipopolysaccharide to the outer membrane of the cell. The chain is UDP-3-O-acylglucosamine N-acyltransferase from Methylorubrum extorquens (strain PA1) (Methylobacterium extorquens).